Consider the following 191-residue polypeptide: Protein LURP-one-related 6 (191 aa).

It belongs to the LOR family.

Its function is as follows. Might be related to the phospholipid scramblase and tubby-like superfamily of membrane tethered transcription factors. This Arabidopsis thaliana (Mouse-ear cress) protein is Protein LURP-one-related 6.